Consider the following 186-residue polypeptide: Putative 3-methyladenine DNA glycosylase (186 aa).

Belongs to the DNA glycosylase MPG family.

The sequence is that of Putative 3-methyladenine DNA glycosylase from Borreliella burgdorferi (strain ATCC 35210 / DSM 4680 / CIP 102532 / B31) (Borrelia burgdorferi).